The following is a 98-amino-acid chain: NADH-ubiquinone oxidoreductase chain 4L (98 aa).

3 helical membrane passes run 1-21 (MSMV…GLLM), 29-49 (SLLC…ATIL), and 61-81 (IILL…LVTV).

It belongs to the complex I subunit 4L family. In terms of assembly, core subunit of respiratory chain NADH dehydrogenase (Complex I) which is composed of 45 different subunits.

The protein resides in the mitochondrion inner membrane. The catalysed reaction is a ubiquinone + NADH + 5 H(+)(in) = a ubiquinol + NAD(+) + 4 H(+)(out). Its function is as follows. Core subunit of the mitochondrial membrane respiratory chain NADH dehydrogenase (Complex I) which catalyzes electron transfer from NADH through the respiratory chain, using ubiquinone as an electron acceptor. Part of the enzyme membrane arm which is embedded in the lipid bilayer and involved in proton translocation. The chain is NADH-ubiquinone oxidoreductase chain 4L (MT-ND4L) from Pusa caspica (Caspian seal).